The chain runs to 119 residues: Flagellar transcriptional regulator FlhD (119 aa).

Belongs to the FlhD family. In terms of assembly, homodimer; disulfide-linked. Forms a heterohexamer composed of two FlhC and four FlhD subunits. Each FlhC binds a FlhD dimer, forming a heterotrimer, and a hexamer assembles by dimerization of two heterotrimers.

The protein localises to the cytoplasm. Functionally, functions in complex with FlhC as a master transcriptional regulator that regulates transcription of several flagellar and non-flagellar operons by binding to their promoter region. Activates expression of class 2 flagellar genes, including fliA, which is a flagellum-specific sigma factor that turns on the class 3 genes. Also regulates genes whose products function in a variety of physiological pathways. The polypeptide is Flagellar transcriptional regulator FlhD (Cronobacter sakazakii (strain ATCC BAA-894) (Enterobacter sakazakii)).